Consider the following 646-residue polypeptide: UvrABC system protein B (646 aa).

Residues Asn-25–Pro-412 enclose the Helicase ATP-binding domain. Residue Gly-38–Thr-45 coordinates ATP. The Beta-hairpin signature appears at Tyr-91–Ile-114. The region spanning Gln-428–Glu-594 is the Helicase C-terminal domain. The UVR domain maps to Glu-611–Asn-646.

This sequence belongs to the UvrB family. As to quaternary structure, forms a heterotetramer with UvrA during the search for lesions. Interacts with UvrC in an incision complex.

The protein resides in the cytoplasm. In terms of biological role, the UvrABC repair system catalyzes the recognition and processing of DNA lesions. A damage recognition complex composed of 2 UvrA and 2 UvrB subunits scans DNA for abnormalities. Upon binding of the UvrA(2)B(2) complex to a putative damaged site, the DNA wraps around one UvrB monomer. DNA wrap is dependent on ATP binding by UvrB and probably causes local melting of the DNA helix, facilitating insertion of UvrB beta-hairpin between the DNA strands. Then UvrB probes one DNA strand for the presence of a lesion. If a lesion is found the UvrA subunits dissociate and the UvrB-DNA preincision complex is formed. This complex is subsequently bound by UvrC and the second UvrB is released. If no lesion is found, the DNA wraps around the other UvrB subunit that will check the other stand for damage. This chain is UvrABC system protein B, found in Methanothermobacter thermautotrophicus (strain ATCC 29096 / DSM 1053 / JCM 10044 / NBRC 100330 / Delta H) (Methanobacterium thermoautotrophicum).